We begin with the raw amino-acid sequence, 293 residues long: 4-hydroxy-tetrahydrodipicolinate synthase (293 aa).

Pyruvate is bound at residue Thr45. Tyr133 functions as the Proton donor/acceptor in the catalytic mechanism. Lys161 serves as the catalytic Schiff-base intermediate with substrate. Ile203 lines the pyruvate pocket.

Belongs to the DapA family. As to quaternary structure, homotetramer; dimer of dimers.

It localises to the cytoplasm. The enzyme catalyses L-aspartate 4-semialdehyde + pyruvate = (2S,4S)-4-hydroxy-2,3,4,5-tetrahydrodipicolinate + H2O + H(+). It participates in amino-acid biosynthesis; L-lysine biosynthesis via DAP pathway; (S)-tetrahydrodipicolinate from L-aspartate: step 3/4. Functionally, catalyzes the condensation of (S)-aspartate-beta-semialdehyde [(S)-ASA] and pyruvate to 4-hydroxy-tetrahydrodipicolinate (HTPA). This Aliivibrio fischeri (strain ATCC 700601 / ES114) (Vibrio fischeri) protein is 4-hydroxy-tetrahydrodipicolinate synthase.